The chain runs to 424 residues: Imidazolonepropionase (424 aa).

Fe(3+) is bound by residues His84 and His86. Residues His84 and His86 each coordinate Zn(2+). Residues Arg93, Tyr156, and His189 each coordinate 4-imidazolone-5-propanoate. Tyr156 provides a ligand contact to N-formimidoyl-L-glutamate. Position 254 (His254) interacts with Fe(3+). A Zn(2+)-binding site is contributed by His254. Glu257 lines the 4-imidazolone-5-propanoate pocket. Asp328 lines the Fe(3+) pocket. Asp328 lines the Zn(2+) pocket. Positions 330 and 332 each coordinate N-formimidoyl-L-glutamate. Ser333 contacts 4-imidazolone-5-propanoate.

Belongs to the metallo-dependent hydrolases superfamily. HutI family. Requires Zn(2+) as cofactor. The cofactor is Fe(3+).

It localises to the cytoplasm. It carries out the reaction 4-imidazolone-5-propanoate + H2O = N-formimidoyl-L-glutamate. It participates in amino-acid degradation; L-histidine degradation into L-glutamate; N-formimidoyl-L-glutamate from L-histidine: step 3/3. Functionally, catalyzes the hydrolytic cleavage of the carbon-nitrogen bond in imidazolone-5-propanoate to yield N-formimidoyl-L-glutamate. It is the third step in the universal histidine degradation pathway. The sequence is that of Imidazolonepropionase from Geobacillus kaustophilus (strain HTA426).